The chain runs to 397 residues: S-adenosylmethionine:tRNA ribosyltransferase-isomerase (397 aa).

This sequence belongs to the QueA family. In terms of assembly, monomer.

It is found in the cytoplasm. The enzyme catalyses 7-aminomethyl-7-carbaguanosine(34) in tRNA + S-adenosyl-L-methionine = epoxyqueuosine(34) in tRNA + adenine + L-methionine + 2 H(+). The protein operates within tRNA modification; tRNA-queuosine biosynthesis. In terms of biological role, transfers and isomerizes the ribose moiety from AdoMet to the 7-aminomethyl group of 7-deazaguanine (preQ1-tRNA) to give epoxyqueuosine (oQ-tRNA). The protein is S-adenosylmethionine:tRNA ribosyltransferase-isomerase of Nostoc sp. (strain PCC 7120 / SAG 25.82 / UTEX 2576).